We begin with the raw amino-acid sequence, 329 residues long: tRNA (cytidine(32)/guanosine(34)-2'-O)-methyltransferase (329 aa).

S-adenosyl-L-methionine-binding residues include Gly-53, Trp-55, Asp-75, Asp-91, and Asp-116. Catalysis depends on Lys-156, which acts as the Proton acceptor. The segment at 221–240 (DFNQLDGPTRIIVPFVTCGD) is required for binding to WDR6. Ser-271 is modified (phosphoserine).

This sequence belongs to the class I-like SAM-binding methyltransferase superfamily. RNA methyltransferase RlmE family. TRM7 subfamily. Interacts with WDR6; the interaction is direct, and required for 2'-O-methylation of position 34 in substrate tRNAs. In terms of tissue distribution, found in fetal brain, lung, liver and kidney. Widely expressed in adult tissue; with high expression in heart and liver, lower expression in skeletal muscle, kidney, and pancreas and also lowly expressed in brain and lung. In the adult brain, expressed in amygdala, caudate nucleus, corpus callosum, hippocampus and thalamus.

The protein localises to the cytoplasm. Its subcellular location is the nucleus. It catalyses the reaction cytidine(32)/guanosine(34) in tRNA + 2 S-adenosyl-L-methionine = 2'-O-methylcytidine(32)/2'-O-methylguanosine(34) in tRNA + 2 S-adenosyl-L-homocysteine + 2 H(+). Its activity is regulated as follows. Inhibited by 2,6-diaminopurine (DAP); inhibition promotes UGA stop-codon readthrough during translation by misincorporation of tRNA(Trp) in the nascent polypeptide. Functionally, methylates the 2'-O-ribose of nucleotides at positions 32 and 34 of the tRNA anticodon loop of substrate tRNAs. Requisite for faithful cytoplasmic translation. Requires THADA for methylation of the nucleotide at position 32 of the anticodon loop of substrate tRNAs. Requires WDR6 for methylation of the nucleotide at position 34 of the anticodon loop of substrate tRNAs. Promotes translation efficiency of the UUU codon. Plays a role in neurogenesis. Required for expression of genes involved in neurogenesis, mitochondrial translation and energy generation, and lipid biosynthesis. Requisite for RNA-mediated gene silencing. May modify position 32 in tRNA(Arg(ACG)), tRNA(Arg(CCG)), tRNA(Arg(UCG)), tRNA(Cys(GCA)), tRNA(Cys(ACA)), tRNA(Gln(CUG)), tRNA(Gln(UUG)), tRNA(Gly(CCC)), tRNA(Leu(CAG))/tRNA(Leu(CAA)), tRNA(Leu(A/IAG)), tRNA(Leu(UAG)), tRNA(Phe(GAA)), tRNA(Pro(AGG))/tRNA(Pro(CGG))/tRNA(Pro(UGG)) and tRNA(Trp(CCA)), and position 34 in tRNA(Phe(GAA)), tRNA(Leu(CAA)), tRNA(Sec(UCA)), and tRNA(Trp(CCA)). This chain is tRNA (cytidine(32)/guanosine(34)-2'-O)-methyltransferase, found in Homo sapiens (Human).